A 303-amino-acid chain; its full sequence is Signal recognition particle receptor FtsY (303 aa).

GTP contacts are provided by residues Gly108–Thr115, Asp190–Arg194, and Thr254–Asp257.

It belongs to the GTP-binding SRP family. FtsY subfamily. As to quaternary structure, part of the signal recognition particle protein translocation system, which is composed of SRP and FtsY. SRP is a ribonucleoprotein composed of Ffh and a 4.5S RNA molecule.

Its subcellular location is the cell inner membrane. It is found in the cytoplasm. It catalyses the reaction GTP + H2O = GDP + phosphate + H(+). Functionally, involved in targeting and insertion of nascent membrane proteins into the cytoplasmic membrane. Acts as a receptor for the complex formed by the signal recognition particle (SRP) and the ribosome-nascent chain (RNC). Interaction with SRP-RNC leads to the transfer of the RNC complex to the Sec translocase for insertion into the membrane, the hydrolysis of GTP by both Ffh and FtsY, and the dissociation of the SRP-FtsY complex into the individual components. This Rickettsia felis (strain ATCC VR-1525 / URRWXCal2) (Rickettsia azadi) protein is Signal recognition particle receptor FtsY.